Here is a 228-residue protein sequence, read N- to C-terminus: uncharacterized protein (228 aa).

Positions 179, 199, and 208 each coordinate S-adenosyl-L-methionine.

It belongs to the class IV-like SAM-binding methyltransferase superfamily. RNA methyltransferase TrmH family.

This is an uncharacterized protein from Borreliella burgdorferi (strain ATCC 35210 / DSM 4680 / CIP 102532 / B31) (Borrelia burgdorferi).